A 402-amino-acid polypeptide reads, in one-letter code: Phosphopentomutase (402 aa).

Mn(2+) contacts are provided by D10, D301, H306, D342, H343, and H354.

Belongs to the phosphopentomutase family. The cofactor is Mn(2+).

The protein localises to the cytoplasm. It carries out the reaction 2-deoxy-alpha-D-ribose 1-phosphate = 2-deoxy-D-ribose 5-phosphate. It catalyses the reaction alpha-D-ribose 1-phosphate = D-ribose 5-phosphate. Its pathway is carbohydrate degradation; 2-deoxy-D-ribose 1-phosphate degradation; D-glyceraldehyde 3-phosphate and acetaldehyde from 2-deoxy-alpha-D-ribose 1-phosphate: step 1/2. Its function is as follows. Isomerase that catalyzes the conversion of deoxy-ribose 1-phosphate (dRib-1-P) and ribose 1-phosphate (Rib-1-P) to deoxy-ribose 5-phosphate (dRib-5-P) and ribose 5-phosphate (Rib-5-P), respectively. This chain is Phosphopentomutase, found in Aeromonas salmonicida (strain A449).